Consider the following 223-residue polypeptide: Phosphoribosylformylglycinamidine synthase subunit PurQ (223 aa).

The Glutamine amidotransferase type-1 domain maps to 4 to 223 (KIGVITFPGT…FLSAIGTIAA (220 aa)). C87 functions as the Nucleophile in the catalytic mechanism. Active-site residues include H195 and E197.

Part of the FGAM synthase complex composed of 1 PurL, 1 PurQ and 2 PurS subunits.

It localises to the cytoplasm. The enzyme catalyses N(2)-formyl-N(1)-(5-phospho-beta-D-ribosyl)glycinamide + L-glutamine + ATP + H2O = 2-formamido-N(1)-(5-O-phospho-beta-D-ribosyl)acetamidine + L-glutamate + ADP + phosphate + H(+). The catalysed reaction is L-glutamine + H2O = L-glutamate + NH4(+). Its pathway is purine metabolism; IMP biosynthesis via de novo pathway; 5-amino-1-(5-phospho-D-ribosyl)imidazole from N(2)-formyl-N(1)-(5-phospho-D-ribosyl)glycinamide: step 1/2. Functionally, part of the phosphoribosylformylglycinamidine synthase complex involved in the purines biosynthetic pathway. Catalyzes the ATP-dependent conversion of formylglycinamide ribonucleotide (FGAR) and glutamine to yield formylglycinamidine ribonucleotide (FGAM) and glutamate. The FGAM synthase complex is composed of three subunits. PurQ produces an ammonia molecule by converting glutamine to glutamate. PurL transfers the ammonia molecule to FGAR to form FGAM in an ATP-dependent manner. PurS interacts with PurQ and PurL and is thought to assist in the transfer of the ammonia molecule from PurQ to PurL. The sequence is that of Phosphoribosylformylglycinamidine synthase subunit PurQ from Corynebacterium efficiens (strain DSM 44549 / YS-314 / AJ 12310 / JCM 11189 / NBRC 100395).